A 94-amino-acid chain; its full sequence is DNA-binding protein HU (94 aa).

The protein belongs to the bacterial histone-like protein family. As to quaternary structure, homodimer.

Functionally, histone-like DNA-binding protein which is capable of wrapping DNA to stabilize it, and thus to prevent its denaturation under extreme environmental conditions. It is essential for heterocyst differentiation. The polypeptide is DNA-binding protein HU (hup) (Nostoc sp. (strain PCC 7120 / SAG 25.82 / UTEX 2576)).